A 401-amino-acid polypeptide reads, in one-letter code: MKTLWQHCHVATMAQGVYSIIEDAAIVTSGALIEWIGPRSQLPSGEYPAVNDLQGAWVTPGLIDCHTHTVFGGNRSGEFEKRLQGVSYAEIAAAGGGIASTVRATREASEDELFASAAKRLKSLMRDGVTTVEMKSGYGLDLASERKILRVIRRLAAELPISVRSTCLAAHALPPEYQDRADDYIDHICAEMLPALAAEGLVDAVDAFCEYLAFSPEQVERVFIAAQKLGLPVKLHAEQLSSLHGSSLAARYHALSADHLEFMDEADAIAMAESDTVAVLLPGAFYFLRETRLPPMEALRKHKVKIAIASDLNPGTSPALSLRLMLNMACTCFRMTPEEALAGATIHAAQALGMAETHGSLEVGKVADFVAWQIDRPADLAYWLGGELDKRVVRHGVESSL.

His-66 and His-68 together coordinate Fe(3+). 2 residues coordinate Zn(2+): His-66 and His-68. 4-imidazolone-5-propanoate is bound by residues Arg-75, Tyr-138, and His-171. Residue Tyr-138 participates in N-formimidoyl-L-glutamate binding. Residue His-236 coordinates Fe(3+). His-236 provides a ligand contact to Zn(2+). 4-imidazolone-5-propanoate is bound at residue Gln-239. Position 311 (Asp-311) interacts with Fe(3+). Asp-311 serves as a coordination point for Zn(2+). Asn-313 and Gly-315 together coordinate N-formimidoyl-L-glutamate. A 4-imidazolone-5-propanoate-binding site is contributed by Thr-316.

It belongs to the metallo-dependent hydrolases superfamily. HutI family. It depends on Zn(2+) as a cofactor. Fe(3+) serves as cofactor.

The protein localises to the cytoplasm. The catalysed reaction is 4-imidazolone-5-propanoate + H2O = N-formimidoyl-L-glutamate. The protein operates within amino-acid degradation; L-histidine degradation into L-glutamate; N-formimidoyl-L-glutamate from L-histidine: step 3/3. Functionally, catalyzes the hydrolytic cleavage of the carbon-nitrogen bond in imidazolone-5-propanoate to yield N-formimidoyl-L-glutamate. It is the third step in the universal histidine degradation pathway. The polypeptide is Imidazolonepropionase (Pseudomonas fluorescens (strain Pf0-1)).